Reading from the N-terminus, the 215-residue chain is Small ribosomal subunit protein uS7 (215 aa).

The protein belongs to the universal ribosomal protein uS7 family. As to quaternary structure, part of the 30S ribosomal subunit.

Its function is as follows. One of the primary rRNA binding proteins, it binds directly to 16S rRNA where it nucleates assembly of the head domain of the 30S subunit. Is located at the subunit interface close to the decoding center. This chain is Small ribosomal subunit protein uS7, found in Thermococcus onnurineus (strain NA1).